A 34-amino-acid polypeptide reads, in one-letter code: Kappa-theraphotoxin-Sc1a (34 aa).

3 cysteine pairs are disulfide-bonded: cysteine 2–cysteine 16, cysteine 9–cysteine 21, and cysteine 15–cysteine 28. Isoleucine 34 carries the isoleucine amide modification.

This sequence belongs to the neurotoxin 10 (Hwtx-1) family. 57 (ScTx1) subfamily. As to expression, expressed by the venom gland.

It is found in the secreted. Its function is as follows. Acts as a gating-modifier to inhibit voltage-gated potassium channels. It inhibits delayed Kv2.1/KCNB1 (IC(50) is 12.7 nM), Kv2.1/Kv9.3 (IC(50) is 7.2 nM) (KCNB1/KCNS3), Kv2.2/KCNB2 (IC(50) is 21.4 nM), and transient Kv4.2/KCND2 (IC(50) is 1.2 nM) channels. This is Kappa-theraphotoxin-Sc1a from Stromatopelma calceatum (Featherleg baboon tarantula).